Consider the following 287-residue polypeptide: Ribosomal RNA small subunit methyltransferase A (287 aa).

Positions 28, 30, 55, 76, 101, and 125 each coordinate S-adenosyl-L-methionine.

This sequence belongs to the class I-like SAM-binding methyltransferase superfamily. rRNA adenine N(6)-methyltransferase family. RsmA subfamily.

It localises to the cytoplasm. The enzyme catalyses adenosine(1518)/adenosine(1519) in 16S rRNA + 4 S-adenosyl-L-methionine = N(6)-dimethyladenosine(1518)/N(6)-dimethyladenosine(1519) in 16S rRNA + 4 S-adenosyl-L-homocysteine + 4 H(+). In terms of biological role, specifically dimethylates two adjacent adenosines (A1518 and A1519) in the loop of a conserved hairpin near the 3'-end of 16S rRNA in the 30S particle. May play a critical role in biogenesis of 30S subunits. This is Ribosomal RNA small subunit methyltransferase A from Alkaliphilus metalliredigens (strain QYMF).